The sequence spans 365 residues: Zinc finger protein lsy-2 (365 aa).

Residues 1 to 36 (MLTRRNAKQSQRNSADQSLSEFNSSSMTHGSNQSVY) form a disordered region. Residues 8–36 (KQSQRNSADQSLSEFNSSSMTHGSNQSVY) show a composition bias toward polar residues. C2H2-type zinc fingers lie at residues 78–100 (HQCNVCNKIFVSYKGLQQHAVIH), 106–128 (FRCDICSKSFRFKSNLFEHRSVH), 134–156 (HACPYCGKTCRLKGNLKKHLRTH), 264–287 (HDCPVCKSQFMTRMDCVSHHTLEH), and 296–318 (FFCEKCYRPFADEASYNQHMSYH).

The protein localises to the nucleus speckle. Its function is as follows. Involved in transcriptional regulation. Required to specify left-right asymmetry of the ASE gustatory neurons, probably acting upstream of microRNA lsy-6. Involved in maintaining the distinction between somatic and germ cells, perhaps acting by repressing germ cell-specific genes in somatic cells. This chain is Zinc finger protein lsy-2, found in Caenorhabditis elegans.